The chain runs to 456 residues: MNTVRETIAAIATAQGRGGVGIVRLSGPLAAKAGQLITGRTLTPRHAHYGPFRDQEGLVLDEGIALFFPGPNSFTGEDVLELQGHGGPVVLDMLLQRCVQVGCRLARPGEFSERAFLNDKLDLAQAEAIADLIEASSSQAARNALRSLQGEFSKRVHSLTEALIALRIYVEAAIDFPEEEIDFLADGHVLSMLDSVRAELSTVQREAGQGALLRDGMTVVIAGRPNAGKSSLLNQLAGREAAIVTAIAGTTRDILREHIHIDGMPLHVVDTAGLRDTDDHVEKIGVERALKAIGEADRVLLVVDSTAPEASDPFALWPEFLDQRPDPGKVTLIRNKADLSGEPVGLEQCDDGHVTITLSAKGDDQGLLLLRDHLKACMGYEQTAESGFSARRRHLDALRQACAHLEHGRAQLTLAGAGELLAEDLRQAQHALGEITGAFSSDDLLGRIFSSFCIGK.

(6S)-5-formyl-5,6,7,8-tetrahydrofolate contacts are provided by arginine 24, glutamate 81, and lysine 120. In terms of domain architecture, TrmE-type G spans 216 to 379 (GMTVVIAGRP…LRDHLKACMG (164 aa)). Asparagine 226 contacts K(+). GTP is bound by residues 226–231 (NAGKSS), 245–251 (TAIAGTT), 270–273 (DTAG), and 335–338 (NKAD). Mg(2+) is bound at residue serine 230. K(+) contacts are provided by threonine 245, isoleucine 247, and threonine 250. Threonine 251 provides a ligand contact to Mg(2+). Lysine 456 is a binding site for (6S)-5-formyl-5,6,7,8-tetrahydrofolate.

Belongs to the TRAFAC class TrmE-Era-EngA-EngB-Septin-like GTPase superfamily. TrmE GTPase family. As to quaternary structure, homodimer. Heterotetramer of two MnmE and two MnmG subunits. K(+) is required as a cofactor.

It localises to the cytoplasm. Exhibits a very high intrinsic GTPase hydrolysis rate. Involved in the addition of a carboxymethylaminomethyl (cmnm) group at the wobble position (U34) of certain tRNAs, forming tRNA-cmnm(5)s(2)U34. The chain is tRNA modification GTPase MnmE from Pseudomonas putida (strain W619).